We begin with the raw amino-acid sequence, 339 residues long: tRNA pseudouridine synthase D (339 aa).

Catalysis depends on D80, which acts as the Nucleophile. The TRUD domain maps to 155–311; the sequence is GFPNYFTEQR…AKGFSWAFEL (157 aa).

Belongs to the pseudouridine synthase TruD family.

The enzyme catalyses uridine(13) in tRNA = pseudouridine(13) in tRNA. In terms of biological role, responsible for synthesis of pseudouridine from uracil-13 in transfer RNAs. The sequence is that of tRNA pseudouridine synthase D from Haemophilus influenzae (strain PittEE).